Consider the following 140-residue polypeptide: Ribosome maturation factor RimP (140 aa).

This sequence belongs to the RimP family.

The protein resides in the cytoplasm. Its function is as follows. Required for maturation of 30S ribosomal subunits. This chain is Ribosome maturation factor RimP, found in Campylobacter jejuni subsp. doylei (strain ATCC BAA-1458 / RM4099 / 269.97).